Here is a 1125-residue protein sequence, read N- to C-terminus: Transient receptor potential cation channel subfamily A member 1 (1125 aa).

The Cytoplasmic segment spans residues 1-721 (MKRSLRRVLR…KWCAYGFRAH (721 aa)). ANK repeat units lie at residues 63-94 (ENLC…ALNV), 98-127 (YGNT…NPNL), 131-161 (NMMA…NINL), 165-194 (NGNT…KLCK), 198-227 (WGDY…KTGY), 239-268 (KKAS…HIDM), 272-301 (AKCM…GSSD), 309-338 (NQET…DINS), and 342-371 (EGRS…KVDI). Cystine bridges form between Cys-193–Cys-666, Cys-463–Cys-666, Cys-609–Cys-622, Cys-622–Cys-666, and Cys-634–Cys-859. A 4-hydroxyproline; transient modification is found at Pro-395. 5 ANK repeats span residues 413-442 (DGCT…SVHS), 446-475 (DKKS…DTRL), 482-511 (HGMT…LFLS), 514-543 (NGWT…KCTD), and 548-577 (EGNT…DILL). (E)-cinnamaldehyde contacts are provided by Cys-415 and Cys-422. Cys-622 lines the (E)-cinnamaldehyde pocket. Cys-634 carries the cysteine sulfenic acid (-SOH); transient; in hyperoxia modification. (E)-cinnamaldehyde is bound by residues Cys-642, Cys-666, and Lys-712. A helical transmembrane segment spans residues 722–742 (MMNLGSYCLGLIPMTLLVVKI). Over 743–767 (QPGMAFNSTGIINETISTHEERINT) the chain is Extracellular. Asn-749 and Asn-755 each carry an N-linked (GlcNAc...) asparagine glycan. The helical transmembrane segment at 768–788 (LNSFPLKICMILVFLSSIFGY) threads the bilayer. Topologically, residues 789-806 (CKEVVQIFQQKRNYFLDY) are cytoplasmic. Ca(2+) is bound by residues Glu-791, Gln-794, Asn-808, and Glu-811. A helical transmembrane segment spans residues 807-827 (NNALEWVIYTTSMIFVLPLFL). At 828 to 832 (DIPAY) the chain is on the extracellular side. Residues 833 to 853 (MQWQCGAIAIFFYWMNFLLYL) traverse the membrane as a helical segment. The Cytoplasmic portion of the chain corresponds to 854-876 (QRFENCGIFIVMLEVIFKTLLRS). Cys-859 carries the post-translational modification Cysteine sulfenic acid (-SOH); transient; in hyperoxia. The helical transmembrane segment at 877 to 897 (TGVFIFLLLAFGLSFYVLLNF) threads the bilayer. Topologically, residues 898–904 (QDAFSTP) are extracellular. The pore-forming intramembrane region spans 905–925 (LLSLIQTFSMMLGDINYRDAF). At 926-937 (LEPLFRNELAYP) the chain is on the extracellular side. A helical transmembrane segment spans residues 938-959 (VLTFGQLIAFTMFVPIVLMNLL). Residues 960-1125 (IGLAVGDIAE…THCSISHPDI (166 aa)) lie on the Cytoplasmic side of the membrane. Residues 1044 to 1073 (MEILKQKYRLKDLTSLLEKQHELIKLIIQK) adopt a coiled-coil conformation. 1048–1054 (KQKYRLK) is an a 1,2-diacyl-sn-glycero-3-phospho-(1D-myo-inositol) binding site.

The protein belongs to the transient receptor (TC 1.A.4) family. In terms of assembly, homotetramer. Interacts with TMEM100. Interacts with EGLN1. Interacts with the scorpion wasabi receptor toxin at the same site that electrophiles but in a non-covalent manner. In terms of processing, TRPA1 activation by electrophiles occurs though covalent modification of specific cysteine residues in the N-terminal cytoplasmic domain. Post-translationally, hydroxylation is required for TRPA1 activity inhibition in normoxia. In hypoxia, the decrease in oxygen concentration diminishes the activity of the hydroxylase EGLN1, thus relieving TRPA1 from inhibition and ultimately leading to channel activation. Oxidation of Cys-634 and Cys-859 in hyperoxia may override the hydroxylase EGLN1-mediated inhibition, causing TRPA1 activation. As to expression, specifically expressed in a subset of nociceptive neurons. Expressed in dorsal root ganglia.

The protein localises to the cell membrane. The enzyme catalyses Ca(2+)(in) = Ca(2+)(out). It catalyses the reaction Mg(2+)(in) = Mg(2+)(out). The catalysed reaction is Na(+)(in) = Na(+)(out). It carries out the reaction K(+)(in) = K(+)(out). The enzyme catalyses Zn(2+)(in) = Zn(2+)(out). With respect to regulation, electrophilic ligands activate the channel by covalent modification of intracellular cysteines; Cys-622 plays a key role in covalent binding of electrophiles. Extracellular Ca(2+) both potentiates and inactivates TRPA1; a rapid potentiation follows by slow desensitization. Activated by increase in intracellular Ca(2+) concentration. Inhibited by ruthenium red, a potent blocker of TRPV channels and selectively by A-967079. Activated by benzyl isothiocyanate (BITC), iodoacetamide, sulfhydryl reactive agent MTSEA, N-methyl maleimide (NMM), N-ethylmaleimide (NEM), and 2-aminoethyldiphenylborinate (2-APB). Also activated by hyperoxia. Acivated by intracellular Zn(2+). TRPA1 activation may critically depend on the presence of small intracellular compounds such as polyphosphates. Functionally, ligand-activated Ca(2+)-permeable, nonselective cation channel. Involved in pain detection and possibly also in cold perception, oxygen concentration perception, cough, itch, and inner ear function. Has a relatively high Ca(2+) selectivity, with a preference for divalent over monovalent cations (Ca(2+) &gt; Ba(2+) &gt; Mg(2+) &gt; NH4(+) &gt; Li(+) &gt; K(+)), the influx of cation into the cytoplasm, leads to membrane depolarization. Has a central role in the pain response to endogenous inflammatory mediators, such as bradykinin and to a diverse array of irritants. Activated by a large variety of structurally unrelated electrophilic and non-electrophilic chemical compounds, such as allylthiocyanate (AITC) from mustard oil or wasabi, cinnamaldehyde, diallyl disulfide (DADS) from garlic, and acrolein, an environmental irritant. Electrophilic ligands activate TRPA1 by interacting with critical N-terminal Cys residues in a covalent manner. Non-electrophile agonists bind at distinct sites in the transmembrane domain to promote channel activation. Also acts as an ionotropic cannabinoid receptor by being activated by delta(9)-tetrahydrocannabinol (THC), the psychoactive component of marijuana. May be a component for the mechanosensitive transduction channel of hair cells in inner ear, thereby participating in the perception of sounds. The sequence is that of Transient receptor potential cation channel subfamily A member 1 from Rattus norvegicus (Rat).